Reading from the N-terminus, the 502-residue chain is Cytochrome P450 2J3 (502 aa).

A heme-binding site is contributed by Cys-448.

This sequence belongs to the cytochrome P450 family. Requires heme as cofactor. In terms of tissue distribution, abundantly expressed in heart and liver.

The protein resides in the endoplasmic reticulum membrane. The protein localises to the microsome membrane. It carries out the reaction an organic molecule + reduced [NADPH--hemoprotein reductase] + O2 = an alcohol + oxidized [NADPH--hemoprotein reductase] + H2O + H(+). This enzyme metabolizes arachidonic acid predominantly via a NADPH-dependent olefin epoxidation mainly to 14,15-, 11,12-, and 8,9-epoxyeicosatrienoic acids (EET). It also acts as an omega-1-hydroxylase by metabolizing arachidonic acid to 19-hydroxyeicosatetraenoic acid (19-OH-AA). This chain is Cytochrome P450 2J3 (Cyp2j3), found in Rattus norvegicus (Rat).